Here is a 445-residue protein sequence, read N- to C-terminus: RNA-binding protein asd-2 (445 aa).

The segment at 22-63 is disordered; the sequence is TVIPPPPNDSGHEFIGPSSGPPQVTITPSGVQSGSANGVSTS. Residues 42–63 show a composition bias toward polar residues; that stretch reads PPQVTITPSGVQSGSANGVSTS. Residues 71-128 form a qua1 domain region; it reads EYLSQLLKDKKQLAAFPNVFHHLERLADEEINKVRVVLFQCEFSKESAPLPDAEGDST. Residues 145–171 form the KH domain; sequence NFVGRILGPRGMTAKQLEQETGCKIMV. Positions 230-253 are qua2 domain; involved in RNA binding; it reads APEGEDDLKRKQLMELAIINGTYR.

As to quaternary structure, interacts with sup-12; in the presence of RNA, but with weak affinity in the absence of RNA. As to expression, isoform b: Expressed in the hypodermis and pharyngeal muscles. Isoform c: Expressed in body wall muscles and phayngeal muscles.

It localises to the nucleus. Functionally, RNA-binding protein that binds to the 5'-NACUAAY-N(1,20)-UAAY-3' consensus sequence in pre-mRNA introns to promote alternative splicing. Required for mutually exclusive alternative splicing where it modulates the switch between mutually exclusive exons during pre-mRNA maturation. Involved in muscle-specific gene expression regulating the alternative splicing of genes such as let-2 and unc-60 to ensure that their respective isoforms are expressed in muscle. Promotes the removal of intron 10 from let-2 pre-mRNA to allow for the exclusive expression of the muscle-specific let-2 isoform (as opposed to the non-muscle-specific isoform expressed in embryos) in body wall muscles during late larval and adult stages of development. Binds cooperatively with RNA-binding protein sup-12 to intron 1A of the unc-60 pre-mRNA to promote alternative splicing and expression of the muscle specific isoform of unc-60. This is RNA-binding protein asd-2 from Caenorhabditis elegans.